An 86-amino-acid polypeptide reads, in one-letter code: RNA-binding protein Hfq (86 aa).

The Sm domain maps to 9–68 (DPYLNTLRKEKVPVSIYLVNGIKLQGSIESFDQFVVLLKNTVSQMVYKHAISTVVPARPV). Residues 66-86 (RPVRLPSPTDSEHGDSEPGNA) form a disordered region. The span at 75 to 86 (DSEHGDSEPGNA) shows a compositional bias: basic and acidic residues.

The protein belongs to the Hfq family. As to quaternary structure, homohexamer.

Its function is as follows. RNA chaperone that binds small regulatory RNA (sRNAs) and mRNAs to facilitate mRNA translational regulation in response to envelope stress, environmental stress and changes in metabolite concentrations. Also binds with high specificity to tRNAs. The chain is RNA-binding protein Hfq from Pseudomonas putida (strain ATCC 700007 / DSM 6899 / JCM 31910 / BCRC 17059 / LMG 24140 / F1).